The sequence spans 761 residues: Proton-coupled zinc antiporter SLC30A5 (761 aa).

At M1 the chain carries N-acetylmethionine. Residues 1 to 29 (MEEKYGGDARPGPGGGLGPVDVPSARLTR) lie on the Cytoplasmic side of the membrane. A helical membrane pass occupies residues 30 to 46 (YILLLCLTKCLKAVGLF). Topologically, residues 47 to 54 (ESYDLLKA) are lumenal. A helical membrane pass occupies residues 55–75 (VHIVQFIFILKLGTAFFMVLF). At 76–96 (QKPFSSGKPITKHQWIKIFKH) the chain is on the cytoplasmic side. The chain crosses the membrane as a helical span at residues 97–117 (AVAGCIISLLWFFGLTLCGPL). Position 118 (R118) is a topological domain, lumenal. The helical transmembrane segment at 119-139 (TLLLFEHSDIVVISLLSVLFT) threads the bilayer. Topologically, residues 140–150 (SSGGGPAKTRG) are cytoplasmic. Residues 151 to 171 (AAFFIIAVICLLLFDNDDLMA) form a helical membrane-spanning segment. The Lumenal portion of the chain corresponds to 172–191 (KMAEHPEGHHDSALTHMLYT). A helical membrane pass occupies residues 192–212 (AIAFLGVADHKGGVLLLVLAL). Residues 213 to 236 (CCKVGFHTASRKLSIDVGGAKRLQ) lie on the Cytoplasmic side of the membrane. Residues 237-257 (ALSQLVSVFLLCPWVIVLSVT) form a helical membrane-spanning segment. The Lumenal portion of the chain corresponds to 258–264 (TESKVES). Residues 265–285 (WFSLIMPFTTVIFFVMILDFY) traverse the membrane as a helical segment. Over 286-301 (MDSVCSVKMDVSKCAR) the chain is Cytoplasmic. A helical membrane pass occupies residues 302-322 (YGSFPIFISALLFGNFWTHPI). Residues 323–340 (TDQLRAMNRAAHQESTEH) are Lumenal-facing. Residues 341–361 (VLSGGVVVSAVFFILSANILS) traverse the membrane as a helical segment. Topologically, residues 362–416 (SPSKRGQKGTLIGYSPEGTPLYHFMGDAFQHSSQSVPRFIKDSLKQVLEESDSRQ) are cytoplasmic. Residues 417–437 (IFYFLCLNLLFTFVELFYGVL) form a helical membrane-spanning segment. The interval 418-636 (FYFLCLNLLF…VLIFLSVIPL (219 aa)) is mediates homodimerization with SLC30A6. Residues 438–446 (TNSLGLISD) lie on the Lumenal side of the membrane. The chain crosses the membrane as a helical span at residues 447–467 (GFHMLFDCSALVMGLFAALMS). 2 residues coordinate Zn(2+): H449 and D453. The Cytoplasmic segment spans residues 468–481 (RWKATRIFSYGYGR). A helical transmembrane segment spans residues 482-502 (IEILSGFINGLFLIVIAFFVF). At 503–518 (MESVARLIDPPELDTN) the chain is on the lumenal side. A helical transmembrane segment spans residues 519–539 (MLTPVSVGGLIVNLIGICAFS). The his-rich loop; required for zinc transport stretch occupies residues 540-574 (HAHSHGHGASQGNCHSDHGHSHHAHGHGHDHGHSH). The Cytoplasmic segment spans residues 540-588 (HAHSHGHGASQGNCHSDHGHSHHAHGHGHDHGHSHGFTGGGMNANMRGV). Residues 549–576 (SQGNCHSDHGHSHHAHGHGHDHGHSHGF) form a disordered region. The helical transmembrane segment at 589–609 (FLHVLADTLGSIGVIVSTVLI) threads the bilayer. Zn(2+)-binding residues include H591 and D595. Topologically, residues 610–613 (EQFG) are lumenal. Residues 614 to 634 (WFIADPLCSLFIAVLIFLSVI) traverse the membrane as a helical segment. Over 635-761 (PLIKDACQVL…KYCKDGTYIM (127 aa)) the chain is Cytoplasmic.

This sequence belongs to the cation diffusion facilitator (CDF) transporter (TC 2.A.4) family. SLC30A subfamily. Heterodimer with SLC30A6/ZNT6; form a functional zinc ion transmembrane transporter. Post-translationally, could homodimerize through the formation of dityrosine bonds upon oxidative stress. As to expression, ubiquitously expressed.

It localises to the golgi apparatus. The protein localises to the golgi stack membrane. The protein resides in the cytoplasmic vesicle. Its subcellular location is the COPII-coated vesicle membrane. It is found in the secretory vesicle membrane. It localises to the trans-Golgi network membrane. It carries out the reaction Zn(2+)(in) + 2 H(+)(out) = Zn(2+)(out) + 2 H(+)(in). Functionally, together with SLC30A6 forms a functional proton-coupled zinc ion antiporter mediating zinc entry into the lumen of organelles along the secretory pathway. By contributing to zinc ion homeostasis within the early secretory pathway, regulates the activation and folding of enzymes like alkaline phosphatases and enzymes involved in phosphatidylinositol glycan anchor biosynthesis. Through the transport of zinc into secretory granules of pancreatic beta-cells, plays an important role in the storage and secretion of insulin. This chain is Proton-coupled zinc antiporter SLC30A5, found in Mus musculus (Mouse).